The primary structure comprises 1454 residues: Probable cleavage and polyadenylation specificity factor subunit 1 (1454 aa).

Positions glutamate 810–asparagine 843 are disordered. Over residues lysine 812–asparagine 843 the composition is skewed to basic and acidic residues.

It belongs to the CPSF1 family. CPSF is a heterotetramer composed of four distinct subunits 160 (cpsf-1), 100 (cpsf-2), 70 (cpsf-3), and 30 kDa (cpsf-4).

The protein resides in the nucleus. CPSF plays a key role in pre-mRNA 3'-end formation, recognizing the AAUAAA signal sequence and interacting with poly(A)polymerase and other factors to bring about cleavage and poly(A) addition. This subunit is involved in the RNA recognition step of the polyadenylation reaction. The polypeptide is Probable cleavage and polyadenylation specificity factor subunit 1 (Caenorhabditis briggsae).